A 332-amino-acid polypeptide reads, in one-letter code: Holliday junction branch migration complex subunit RuvB (332 aa).

Positions Met1–Tyr181 are large ATPase domain (RuvB-L). Residues Leu20, Arg21, Gly62, Lys65, Thr66, Thr67, Glu128–Phe130, Arg171, Tyr181, and Arg218 each bind ATP. Residue Thr66 participates in Mg(2+) binding. The interval Ala182–Asp252 is small ATPAse domain (RuvB-S). Residues His255–Lys332 are head domain (RuvB-H). Residues Arg291, Arg310, Arg312, and Arg315 each coordinate DNA.

The protein belongs to the RuvB family. Homohexamer. Forms an RuvA(8)-RuvB(12)-Holliday junction (HJ) complex. HJ DNA is sandwiched between 2 RuvA tetramers; dsDNA enters through RuvA and exits via RuvB. An RuvB hexamer assembles on each DNA strand where it exits the tetramer. Each RuvB hexamer is contacted by two RuvA subunits (via domain III) on 2 adjacent RuvB subunits; this complex drives branch migration. In the full resolvosome a probable DNA-RuvA(4)-RuvB(12)-RuvC(2) complex forms which resolves the HJ.

It is found in the cytoplasm. The catalysed reaction is ATP + H2O = ADP + phosphate + H(+). Functionally, the RuvA-RuvB-RuvC complex processes Holliday junction (HJ) DNA during genetic recombination and DNA repair, while the RuvA-RuvB complex plays an important role in the rescue of blocked DNA replication forks via replication fork reversal (RFR). RuvA specifically binds to HJ cruciform DNA, conferring on it an open structure. The RuvB hexamer acts as an ATP-dependent pump, pulling dsDNA into and through the RuvAB complex. RuvB forms 2 homohexamers on either side of HJ DNA bound by 1 or 2 RuvA tetramers; 4 subunits per hexamer contact DNA at a time. Coordinated motions by a converter formed by DNA-disengaged RuvB subunits stimulates ATP hydrolysis and nucleotide exchange. Immobilization of the converter enables RuvB to convert the ATP-contained energy into a lever motion, pulling 2 nucleotides of DNA out of the RuvA tetramer per ATP hydrolyzed, thus driving DNA branch migration. The RuvB motors rotate together with the DNA substrate, which together with the progressing nucleotide cycle form the mechanistic basis for DNA recombination by continuous HJ branch migration. Branch migration allows RuvC to scan DNA until it finds its consensus sequence, where it cleaves and resolves cruciform DNA. The chain is Holliday junction branch migration complex subunit RuvB from Streptococcus pneumoniae (strain CGSP14).